A 556-amino-acid chain; its full sequence is Formate--tetrahydrofolate ligase (556 aa).

ATP is bound at residue 65-72 (TPAGEGKS).

It belongs to the formate--tetrahydrofolate ligase family.

The catalysed reaction is (6S)-5,6,7,8-tetrahydrofolate + formate + ATP = (6R)-10-formyltetrahydrofolate + ADP + phosphate. It participates in one-carbon metabolism; tetrahydrofolate interconversion. The protein is Formate--tetrahydrofolate ligase of Streptococcus thermophilus (strain ATCC BAA-250 / LMG 18311).